Reading from the N-terminus, the 232-residue chain is uncharacterized protein (232 aa).

The chain crosses the membrane as a helical span at residues 209–229 (ATISTPALGYAYFLFTLTLVF).

The protein localises to the host membrane. This is an uncharacterized protein from Saccharolobus islandicus (Sulfolobus islandicus).